The sequence spans 802 residues: Ent-copalyl diphosphate synthase, chloroplastic (802 aa).

The N-terminal 60 residues, 1-60 (MSLQYHVLNSIPSTTFLSSTKTTISSSFLTISGSPLNVARDKSRSGSIHCSKLRTQEYIN), are a transit peptide targeting the chloroplast. Lys-245 is a substrate binding site. Residues Asp-377 and Asp-379 each coordinate Mg(2+). Residues 377 to 380 (DIDD) carry the DXDD motif motif. Lys-463 lines the substrate pocket.

Belongs to the terpene synthase family. Tpsc subfamily. Requires Mg(2+) as cofactor. The N-terminus is blocked. In terms of tissue distribution, expressed in roots, leaves, flowers and also in siliques.

The protein localises to the plastid. Its subcellular location is the chloroplast. The enzyme catalyses (2E,6E,10E)-geranylgeranyl diphosphate = ent-copalyl diphosphate. The protein operates within plant hormone biosynthesis; gibberellin biosynthesis. Its activity is regulated as follows. Inhibited by high concentrations of magnesium. In terms of biological role, catalyzes the conversion of geranylgeranyl diphosphate to the gibberellin precursor ent-copalyl diphosphate. The protein is Ent-copalyl diphosphate synthase, chloroplastic (GA1) of Arabidopsis thaliana (Mouse-ear cress).